An 810-amino-acid polypeptide reads, in one-letter code: LPS-assembly protein LptD (810 aa).

The first 29 residues, 1–29, serve as a signal peptide directing secretion; that stretch reads MTKRTLGYSYPIALTISLVPALTPAIVQA.

Belongs to the LptD family. In terms of assembly, component of the lipopolysaccharide transport and assembly complex. Interacts with LptE and LptA.

The protein resides in the cell outer membrane. Its function is as follows. Together with LptE, is involved in the assembly of lipopolysaccharide (LPS) at the surface of the outer membrane. In Aeromonas hydrophila subsp. hydrophila (strain ATCC 7966 / DSM 30187 / BCRC 13018 / CCUG 14551 / JCM 1027 / KCTC 2358 / NCIMB 9240 / NCTC 8049), this protein is LPS-assembly protein LptD.